The sequence spans 202 residues: Tetranectin (202 aa).

The signal sequence occupies residues 1–21; sequence MGFWGTYLLFCLFSFLSQLTA. Cystine bridges form between C71-C81, C98-C197, and C173-C189. Residues 77–198 enclose the C-type lectin domain; sequence VNLKCLLAFT…CRDQLPYICQ (122 aa).

In terms of assembly, homotrimer. As to expression, highest expression in lung, skeletal muscle and heart. Expressed in retina.

Its subcellular location is the secreted. In terms of biological role, tetranectin binds to plasminogen and to isolated kringle 4. May be involved in the packaging of molecules destined for exocytosis. Plays a role in retinal function. This is Tetranectin (Clec3b) from Mus musculus (Mouse).